A 239-amino-acid chain; its full sequence is MAAIPWRPFNLRGIKMKGLLSLLIFSMVLPAHAGIVIYGTRIIYPAENKEVMVQLMNQGNRSSLLQAWIDDGDTSLPPEKIQVPFMLTPPVAKIGANSGQQVKIKIMPNKLPTNKESIFYLNVLDIPPNSPEQEGKNALKFAMQNRIKLFYRPAGIAPVNKATFKKLLVNRSGNGLVIKNDSANWVTISDVKANNVKVNYETIMIAPLESQSVNVKSNNANNWHLTIIDDHGNYISDKI.

The signal sequence occupies residues Met1–Ala31.

This sequence belongs to the periplasmic pilus chaperone family.

It is found in the periplasm. In terms of biological role, part of the yehABCD fimbrial operon. Could contribute to adhesion to various surfaces in specific environmental niches. In Escherichia coli (strain K12), this protein is Probable fimbrial chaperone YehC (yehC).